Consider the following 376-residue polypeptide: Glucose-1-phosphate adenylyltransferase (376 aa).

Residues Tyr-101, Gly-166, 181 to 182, and Ser-192 contribute to the alpha-D-glucose 1-phosphate site; that span reads EK.

Belongs to the bacterial/plant glucose-1-phosphate adenylyltransferase family. In terms of assembly, homotetramer.

It catalyses the reaction alpha-D-glucose 1-phosphate + ATP + H(+) = ADP-alpha-D-glucose + diphosphate. It participates in glycan biosynthesis; glycogen biosynthesis. Involved in the biosynthesis of ADP-glucose, a building block required for the elongation reactions to produce glycogen. Catalyzes the reaction between ATP and alpha-D-glucose 1-phosphate (G1P) to produce pyrophosphate and ADP-Glc. The polypeptide is Glucose-1-phosphate adenylyltransferase (Bacillus thuringiensis (strain Al Hakam)).